The sequence spans 305 residues: tRNA uridine(34) hydroxylase (305 aa).

Residues 125–219 enclose the Rhodanese domain; sequence ADENTVVVDT…YLEEVPREQS (95 aa). The active-site Cysteine persulfide intermediate is the cysteine 179.

It belongs to the TrhO family.

It catalyses the reaction uridine(34) in tRNA + AH2 + O2 = 5-hydroxyuridine(34) in tRNA + A + H2O. Functionally, catalyzes oxygen-dependent 5-hydroxyuridine (ho5U) modification at position 34 in tRNAs. In Brucella suis (strain ATCC 23445 / NCTC 10510), this protein is tRNA uridine(34) hydroxylase.